The following is a 311-amino-acid chain: Porphobilinogen deaminase (311 aa).

Cys-245 carries the post-translational modification S-(dipyrrolylmethanemethyl)cysteine.

This sequence belongs to the HMBS family. As to quaternary structure, monomer. The cofactor is dipyrromethane.

It carries out the reaction 4 porphobilinogen + H2O = hydroxymethylbilane + 4 NH4(+). Its pathway is porphyrin-containing compound metabolism; protoporphyrin-IX biosynthesis; coproporphyrinogen-III from 5-aminolevulinate: step 2/4. In terms of biological role, tetrapolymerization of the monopyrrole PBG into the hydroxymethylbilane pre-uroporphyrinogen in several discrete steps. This chain is Porphobilinogen deaminase, found in Acinetobacter baylyi (strain ATCC 33305 / BD413 / ADP1).